The primary structure comprises 367 residues: Glutamate 5-kinase (367 aa).

Residue Lys9 participates in ATP binding. Residues Ser49, Asp136, and Asn148 each contribute to the substrate site. ATP is bound by residues Thr168–Asp169 and Thr210–Lys216. Residues Ser276 to Arg350 form the PUA domain.

Belongs to the glutamate 5-kinase family.

The protein localises to the cytoplasm. The catalysed reaction is L-glutamate + ATP = L-glutamyl 5-phosphate + ADP. It participates in amino-acid biosynthesis; L-proline biosynthesis; L-glutamate 5-semialdehyde from L-glutamate: step 1/2. In terms of biological role, catalyzes the transfer of a phosphate group to glutamate to form L-glutamate 5-phosphate. The chain is Glutamate 5-kinase from Bacillus cereus (strain ATCC 10987 / NRS 248).